The sequence spans 342 residues: S-adenosylmethionine:tRNA ribosyltransferase-isomerase (342 aa).

The protein belongs to the QueA family. As to quaternary structure, monomer.

It localises to the cytoplasm. The catalysed reaction is 7-aminomethyl-7-carbaguanosine(34) in tRNA + S-adenosyl-L-methionine = epoxyqueuosine(34) in tRNA + adenine + L-methionine + 2 H(+). It functions in the pathway tRNA modification; tRNA-queuosine biosynthesis. Functionally, transfers and isomerizes the ribose moiety from AdoMet to the 7-aminomethyl group of 7-deazaguanine (preQ1-tRNA) to give epoxyqueuosine (oQ-tRNA). The chain is S-adenosylmethionine:tRNA ribosyltransferase-isomerase from Oceanobacillus iheyensis (strain DSM 14371 / CIP 107618 / JCM 11309 / KCTC 3954 / HTE831).